The primary structure comprises 521 residues: Tubulin-specific chaperone E (521 aa).

In terms of domain architecture, CAP-Gly spans 24–68; that stretch reads GPVPPTAGVWLGVEWDHPERGKHDGSHDGVRYFTCRHPTGGSFVR. LRR repeat units lie at residues 147 to 168, 173 to 194, 199 to 220, 224 to 245, 247 to 268, 271 to 292, and 301 to 322; these read FVQS…AAIT, SLQE…SSLS, HLRV…HCAP, QVEE…EHVL, ALTV…EISH, RLER…DVPA, and ALKE…NELE. The LRRCT domain maps to 335–377; the sequence is NPLLHKEKNLETARQIMIARLGQLELLDMRQILSDERRGAELD.

It belongs to the TBCE family. Supercomplex made of cofactors A to E. Cofactors A and D function by capturing and stabilizing tubulin in a quasi-native conformation. Cofactor E binds to the cofactor D-tubulin complex; interaction with cofactor C then causes the release of tubulin polypeptides that are committed to the native state.

It localises to the cytoplasm. It is found in the cytoskeleton. In terms of biological role, tubulin-folding protein; involved in the second step of the tubulin folding pathway. The polypeptide is Tubulin-specific chaperone E (tbce) (Danio rerio (Zebrafish)).